A 334-amino-acid polypeptide reads, in one-letter code: Putative peptide import ATP-binding protein BAB2_1053 (334 aa).

In terms of domain architecture, ABC transporter spans 22-272 (VRTDDLVRDF…PLHPYSRALL (251 aa)). 64–71 (GESGSGKS) provides a ligand contact to ATP.

Belongs to the ABC transporter superfamily. The complex is composed of two ATP-binding proteins (BAB2_1052 and BAB2_1053), two transmembrane proteins (BAB2_1050 and BAB2_1051) and a solute-binding protein (BAB2_1049).

Its subcellular location is the cell inner membrane. Probably part of an ABC transporter complex that could be involved in peptide import. Probably responsible for energy coupling to the transport system. The sequence is that of Putative peptide import ATP-binding protein BAB2_1053 from Brucella abortus (strain 2308).